The primary structure comprises 165 residues: uncharacterized protein (165 aa).

Residues 15–35 (MSPAIILIGVLILIVLFVIKF) form a helical membrane-spanning segment. Positions 67 to 119 (ISQLNTLRATLAAKKKELKTLRTARKKECTEQLAKTQAEVDRIQAKIDNFSSR) form a coiled coil. Positions 123–156 (VPLPGGEVGPPYNPPPPRTNTRPNPRPNPRPAQL) are disordered. Residues 133-154 (PYNPPPPRTNTRPNPRPNPRPA) show a composition bias toward pro residues.

The protein localises to the membrane. This is an uncharacterized protein from Acheta domesticus (House cricket).